A 243-amino-acid chain; its full sequence is UPF0246 protein M6_Spy1787 (243 aa).

The protein belongs to the UPF0246 family.

In Streptococcus pyogenes serotype M6 (strain ATCC BAA-946 / MGAS10394), this protein is UPF0246 protein M6_Spy1787.